The sequence spans 347 residues: UPF0284 protein M1425_0030 (347 aa).

Belongs to the UPF0284 family.

This Saccharolobus islandicus (strain M.14.25 / Kamchatka #1) (Sulfolobus islandicus) protein is UPF0284 protein M1425_0030.